The primary structure comprises 346 residues: S-adenosylmethionine:tRNA ribosyltransferase-isomerase (346 aa).

This sequence belongs to the QueA family. Monomer.

The protein resides in the cytoplasm. The catalysed reaction is 7-aminomethyl-7-carbaguanosine(34) in tRNA + S-adenosyl-L-methionine = epoxyqueuosine(34) in tRNA + adenine + L-methionine + 2 H(+). It functions in the pathway tRNA modification; tRNA-queuosine biosynthesis. Functionally, transfers and isomerizes the ribose moiety from AdoMet to the 7-aminomethyl group of 7-deazaguanine (preQ1-tRNA) to give epoxyqueuosine (oQ-tRNA). This is S-adenosylmethionine:tRNA ribosyltransferase-isomerase from Cereibacter sphaeroides (strain KD131 / KCTC 12085) (Rhodobacter sphaeroides).